The following is a 443-amino-acid chain: tRNA (guanine-N(7)-)-methyltransferase non-catalytic subunit TRM82 (443 aa).

Residues 67 to 93 form a disordered region; that stretch reads ASKKLKTNDGEPVAQPKKQAKVPKPGP. 3 WD repeats span residues 97–137, 193–235, and 239–279; these read PVYQ…KDNI, GHVS…IVDK, and GHEE…LLFK.

Belongs to the WD repeat TRM82 family. In terms of assembly, forms a heterodimer with the catalytic subunit TRM8.

The protein resides in the nucleus. Its pathway is tRNA modification; N(7)-methylguanine-tRNA biosynthesis. Its function is as follows. Required for the formation of N(7)-methylguanine at position 46 (m7G46) in tRNA. In the complex, it is required to stabilize and induce conformational changes of the catalytic subunit. In Kluyveromyces lactis (strain ATCC 8585 / CBS 2359 / DSM 70799 / NBRC 1267 / NRRL Y-1140 / WM37) (Yeast), this protein is tRNA (guanine-N(7)-)-methyltransferase non-catalytic subunit TRM82.